The chain runs to 54 residues: MAVQQNRKTRSRRGMRRSHDALTAAQLSVDSTSGETHRRHHVTADGYYRGKKVI.

The interval 1-54 (MAVQQNRKTRSRRGMRRSHDALTAAQLSVDSTSGETHRRHHVTADGYYRGKKVI) is disordered. The span at 7–16 (RKTRSRRGMR) shows a compositional bias: basic residues. The segment covering 25–34 (AQLSVDSTSG) has biased composition (polar residues).

The protein belongs to the bacterial ribosomal protein bL32 family.

This chain is Large ribosomal subunit protein bL32, found in Tolumonas auensis (strain DSM 9187 / NBRC 110442 / TA 4).